The following is a 347-amino-acid chain: GMP reductase (347 aa).

108-131 (ADFEKTKQILDLNSALNFVCIDVA) is an NADP(+) binding site. Residues Gly181 and Gly183 each contribute to the K(+) site. Cys186 (thioimidate intermediate) is an active-site residue. 216 to 239 (IVSDGGCTTPGDVAKAFGGGADFV) lines the NADP(+) pocket.

It belongs to the IMPDH/GMPR family. GuaC type 1 subfamily. Homotetramer.

The catalysed reaction is IMP + NH4(+) + NADP(+) = GMP + NADPH + 2 H(+). Functionally, catalyzes the irreversible NADPH-dependent deamination of GMP to IMP. It functions in the conversion of nucleobase, nucleoside and nucleotide derivatives of G to A nucleotides, and in maintaining the intracellular balance of A and G nucleotides. This Escherichia coli O81 (strain ED1a) protein is GMP reductase.